Reading from the N-terminus, the 350-residue chain is Heat-inducible transcription repressor HrcA (350 aa).

This sequence belongs to the HrcA family.

Its function is as follows. Negative regulator of class I heat shock genes (grpE-dnaK-dnaJ and groELS operons). Prevents heat-shock induction of these operons. This Xanthomonas oryzae pv. oryzae (strain KACC10331 / KXO85) protein is Heat-inducible transcription repressor HrcA.